We begin with the raw amino-acid sequence, 104 residues long: L-rhamnose mutarotase (104 aa).

Tyr-18 is a substrate binding site. His-22 serves as the catalytic Proton donor. Substrate contacts are provided by residues Tyr-41 and 76 to 77 (WW).

This sequence belongs to the rhamnose mutarotase family. In terms of assembly, homodimer.

The protein resides in the cytoplasm. The enzyme catalyses alpha-L-rhamnose = beta-L-rhamnose. Its pathway is carbohydrate metabolism; L-rhamnose metabolism. Its function is as follows. Involved in the anomeric conversion of L-rhamnose. This chain is L-rhamnose mutarotase, found in Salmonella agona (strain SL483).